Reading from the N-terminus, the 466-residue chain is Argininosuccinate lyase (466 aa).

It belongs to the lyase 1 family. Argininosuccinate lyase subfamily.

It is found in the cytoplasm. It carries out the reaction 2-(N(omega)-L-arginino)succinate = fumarate + L-arginine. Its pathway is amino-acid biosynthesis; L-arginine biosynthesis; L-arginine from L-ornithine and carbamoyl phosphate: step 3/3. In Synechococcus elongatus (strain ATCC 33912 / PCC 7942 / FACHB-805) (Anacystis nidulans R2), this protein is Argininosuccinate lyase.